Consider the following 572-residue polypeptide: Phosphoenolpyruvate-protein phosphotransferase (572 aa).

The Tele-phosphohistidine intermediate role is filled by H191. Positions 298 and 334 each coordinate phosphoenolpyruvate. Positions 433 and 457 each coordinate Mg(2+). Phosphoenolpyruvate is bound by residues 456-457 (ND) and R467. C504 functions as the Proton donor in the catalytic mechanism.

It belongs to the PEP-utilizing enzyme family. Homodimer. Mg(2+) is required as a cofactor.

The protein resides in the cytoplasm. It catalyses the reaction L-histidyl-[protein] + phosphoenolpyruvate = N(pros)-phospho-L-histidyl-[protein] + pyruvate. Functionally, general (non sugar-specific) component of the phosphoenolpyruvate-dependent sugar phosphotransferase system (sugar PTS). This major carbohydrate active-transport system catalyzes the phosphorylation of incoming sugar substrates concomitantly with their translocation across the cell membrane. Enzyme I transfers the phosphoryl group from phosphoenolpyruvate (PEP) to the phosphoryl carrier protein (HPr). The polypeptide is Phosphoenolpyruvate-protein phosphotransferase (Staphylococcus aureus (strain MSSA476)).